A 584-amino-acid chain; its full sequence is MKDYDDVILRPEASELSKTEFCNPAFDPEAGPSCPPPALQRDVGSRLQAPWHAQRLRGLQPDCHFSWFCILLLSGLLLLLLGLLVAVILAQLQATSLPRTTKNPLLTRGLTPMGVIPSTTPNTTTTTTTTTPARTGQQEAAMSPTHQTTCGGLLPGPSGFFSSPNYPDLYPPLSHCVWHIQVAAGQTIQLKIQALSIESMLTCLFDRLEIISEPTGPLLRVCGKTPPATLNTNTSHLRVSFVSDNDVEGSGFQAWYQAVAPGHWSCAHNEFHCDLLLCLKRDSVCDGITECADGSDEANCSAKTLGCGGNLTGLYGVFSTPNYPQHYPHQQLCTWYIEVPVGYGIRLEFHNFSLEAQAECKFDYVEVYEASNLGTFSFLGRFCGAEPPLNVVSSMHQLAVIFKTDLGISSGGFLATYQAINTTESGCPWAEFCQSGGYRDLQWMCDLWKDCANDSNDNCSSHLSPQPDLTCEPVQVEMCLGLSYNTTAFPNIWVGLATQTEVTDILRGYKSLTSLPCYQTFQRFLCGLLVPRCTSLGTILPPCRSVCQAAEQQCQSSLALLGTPWPFNCNRLPVAASLEACSQP.

Residues 1 to 69 lie on the Cytoplasmic side of the membrane; it reads MKDYDDVILR…QPDCHFSWFC (69 aa). The helical; Signal-anchor for type II membrane protein transmembrane segment at 70 to 90 threads the bilayer; sequence ILLLSGLLLLLLGLLVAVILA. Topologically, residues 91 to 584 are extracellular; that stretch reads QLQATSLPRT…AASLEACSQP (494 aa). Positions 108-140 are disordered; that stretch reads RGLTPMGVIPSTTPNTTTTTTTTTPARTGQQEA. Positions 119 to 132 are enriched in low complexity; sequence TTPNTTTTTTTTTP. 2 disulfides stabilise this stretch: C150/C176 and C203/C222. Residues 150–259 enclose the CUB 1 domain; the sequence is CGGLLPGPSG…SGFQAWYQAV (110 aa). N233 is a glycosylation site (N-linked (GlcNAc...) asparagine). Residues 265–301 form the LDL-receptor class A 1 domain; sequence SCAHNEFHCDLLLCLKRDSVCDGITECADGSDEANCS. 5 cysteine pairs are disulfide-bonded: C266–C278, C273–C291, C285–C300, C307–C333, and C360–C383. The region spanning 307 to 420 is the CUB 2 domain; it reads CGGNLTGLYG…GGFLATYQAI (114 aa). N-linked (GlcNAc...) asparagine glycosylation occurs at N421. Positions 426 to 460 constitute an LDL-receptor class A 2 domain; sequence GCPWAEFCQSGGYRDLQWMCDLWKDCANDSNDNCS. Disulfide bonds link C433–C451, C445–C459, C471–C533, C479–C526, C517–C554, C543–C581, and C547–C569. Residue N458 is glycosylated (N-linked (GlcNAc...) asparagine). Residues 466–584 form the FZ domain; sequence QPDLTCEPVQ…AASLEACSQP (119 aa).

Interacts with C1QTNF5. As to expression, expressed in retinal pigment epithelium and ciliary epithelium of the eye.

The protein localises to the apical cell membrane. In terms of biological role, may play a role in eye development. The polypeptide is Membrane frizzled-related protein (Mfrp) (Mus musculus (Mouse)).